Consider the following 62-residue polypeptide: Conotoxin TsMLCL-02 (62 aa).

The N-terminal stretch at 1–19 (MLCLPVFIILLLLASPAAP) is a signal peptide. A propeptide spanning residues 20–54 (NPLERRIQSDLIRAALEDADMKTEKGILSSIMGTL) is cleaved from the precursor.

The protein belongs to the conotoxin T superfamily. As to expression, expressed by the venom duct.

The protein resides in the secreted. The sequence is that of Conotoxin TsMLCL-02 from Conus tessulatus (Tessellate cone).